Here is an 85-residue protein sequence, read N- to C-terminus: Depressant scorpion toxin BmKIM (85 aa).

The signal sequence occupies residues 1 to 21; sequence MKLFLLLVFFASMLIDGLVNA. The LCN-type CS-alpha/beta domain occupies 22–82; that stretch reads DGYIRGSNGC…TWKSESNTCG (61 aa). 4 cysteine pairs are disulfide-bonded: C31–C81, C35–C56, C42–C63, and C46–C65. At G82 the chain carries Glycine amide.

It belongs to the long (4 C-C) scorpion toxin superfamily. Sodium channel inhibitor family. As to expression, expressed by the venom gland.

It is found in the secreted. Its function is as follows. Causes a slow progressive depressant flaccid paralysis, when injected into S.falculata blowfly larvae. Inhibits dose-dependently the total sodium (Nav) currents both in dorsal root ganglia neurons and in ventricular myocytes. Is toxic to mice by intravenous injection, but not by subcutaneous or intracerebroventricular injection. Produces antiarrhythmia in rat. Is then active on both mammals and insects. The protein is Depressant scorpion toxin BmKIM (KIM2) of Olivierus martensii (Manchurian scorpion).